A 489-amino-acid polypeptide reads, in one-letter code: Rhamnulokinase (489 aa).

13-17 (ASSGR) contacts ATP. Cysteines 68 and 222 form a disulfide. Substrate contacts are provided by residues Gly-83 and 236–238 (HDT). The Proton acceptor role is filled by Asp-237. Thr-259 is an ATP binding site. Substrate is bound at residue Asn-296. Gln-304 contacts ATP. Cys-353 and Cys-370 are oxidised to a cystine. Gly-402 is a binding site for ATP. Cys-413 and Cys-417 form a disulfide bridge.

It belongs to the rhamnulokinase family. The cofactor is Mg(2+).

The enzyme catalyses L-rhamnulose + ATP = L-rhamnulose 1-phosphate + ADP + H(+). The protein operates within carbohydrate degradation; L-rhamnose degradation; glycerone phosphate from L-rhamnose: step 2/3. Its function is as follows. Involved in the catabolism of L-rhamnose (6-deoxy-L-mannose). Catalyzes the transfer of the gamma-phosphate group from ATP to the 1-hydroxyl group of L-rhamnulose to yield L-rhamnulose 1-phosphate. This Enterobacter sp. (strain 638) protein is Rhamnulokinase.